The chain runs to 318 residues: Bis(5'-nucleosyl)-tetraphosphatase, symmetrical (318 aa).

The tract at residues 269–318 (PGREVTGPAPVARAPRRPRERLGRQRSRGNRGNAGNTAVPAKPQVDTPQD) is disordered. Residues 282–297 (APRRPRERLGRQRSRG) show a composition bias toward basic residues.

This sequence belongs to the Ap4A hydrolase family.

It carries out the reaction P(1),P(4)-bis(5'-adenosyl) tetraphosphate + H2O = 2 ADP + 2 H(+). Hydrolyzes diadenosine 5',5'''-P1,P4-tetraphosphate to yield ADP. The sequence is that of Bis(5'-nucleosyl)-tetraphosphatase, symmetrical from Xanthomonas oryzae pv. oryzae (strain KACC10331 / KXO85).